An 88-amino-acid polypeptide reads, in one-letter code: Small ribosomal subunit protein bS20 (88 aa).

The tract at residues 1–27 (MANSKSAKKRALQSEKRRQHNASRRSM) is disordered.

The protein belongs to the bacterial ribosomal protein bS20 family.

In terms of biological role, binds directly to 16S ribosomal RNA. This Shewanella denitrificans (strain OS217 / ATCC BAA-1090 / DSM 15013) protein is Small ribosomal subunit protein bS20.